An 88-amino-acid chain; its full sequence is Apolipoprotein C-I (88 aa).

The signal sequence occupies residues 1 to 26; the sequence is MRLFIALPVLIVVVAMALEGPAPAQA.

Belongs to the apolipoprotein C1 family.

The protein resides in the secreted. In terms of biological role, inhibitor of lipoprotein binding to the low density lipoprotein (LDL) receptor, LDL receptor-related protein, and very low density lipoprotein (VLDL) receptor. Associates with high density lipoproteins (HDL) and the triacylglycerol-rich lipoproteins in the plasma and makes up about 10% of the protein of the VLDL and 2% of that of HDL. Appears to interfere directly with fatty acid uptake and is also the major plasma inhibitor of cholesteryl ester transfer protein (CETP). Modulates the interaction of APOE with beta-migrating VLDL and inhibits binding of beta-VLDL to the LDL receptor-related protein. Binds free fatty acids and reduces their intracellular esterification. This is Apolipoprotein C-I (Apoc1) from Grammomys surdaster (African woodland thicket rat).